An 825-amino-acid polypeptide reads, in one-letter code: IQ and AAA domain-containing protein 1-like (825 aa).

The IQ domain maps to 206–235; it reads RDQGAIVIQKVWKGYLQRKRIEQDRRVEME. Residues 344–366 are compositionally biased toward basic and acidic residues; it reads QAQESRKKDQEKKEKNKEKEKEK. 2 disordered regions span residues 344–378 and 459–487; these read QAQE…KEEK and DREE…KDLT. The span at 467–482 shows a compositional bias: basic residues; it reads KSPKKKGGKKSGKKKK. Residue 572-579 coordinates ATP; it reads GPSGMGKK.

This sequence belongs to the AAA ATPase family.

The polypeptide is IQ and AAA domain-containing protein 1-like (Iqca1l) (Mus musculus (Mouse)).